Consider the following 686-residue polypeptide: Methionine--tRNA ligase (686 aa).

Positions Pro15–His25 match the 'HIGH' region motif. 4 residues coordinate Zn(2+): Cys146, Cys149, Cys159, and Cys162. A 'KMSKS' region motif is present at residues Lys332–Ser336. Lys335 serves as a coordination point for ATP. Residues Ala585 to Met686 enclose the tRNA-binding domain.

The protein belongs to the class-I aminoacyl-tRNA synthetase family. MetG type 1 subfamily. Homodimer. It depends on Zn(2+) as a cofactor.

It is found in the cytoplasm. The enzyme catalyses tRNA(Met) + L-methionine + ATP = L-methionyl-tRNA(Met) + AMP + diphosphate. In terms of biological role, is required not only for elongation of protein synthesis but also for the initiation of all mRNA translation through initiator tRNA(fMet) aminoacylation. This Aliivibrio salmonicida (strain LFI1238) (Vibrio salmonicida (strain LFI1238)) protein is Methionine--tRNA ligase.